The sequence spans 376 residues: Glutamate 5-kinase (376 aa).

Position 10 (lysine 10) interacts with ATP. Substrate is bound by residues serine 50, aspartate 137, and asparagine 149. Residue 169–170 coordinates ATP; it reads TD. In terms of domain architecture, PUA spans 275–353; sequence RGRLVLDAGA…AEIAGVLGFM (79 aa).

This sequence belongs to the glutamate 5-kinase family.

Its subcellular location is the cytoplasm. It carries out the reaction L-glutamate + ATP = L-glutamyl 5-phosphate + ADP. The protein operates within amino-acid biosynthesis; L-proline biosynthesis; L-glutamate 5-semialdehyde from L-glutamate: step 1/2. Functionally, catalyzes the transfer of a phosphate group to glutamate to form L-glutamate 5-phosphate. The sequence is that of Glutamate 5-kinase from Alcanivorax borkumensis (strain ATCC 700651 / DSM 11573 / NCIMB 13689 / SK2).